Here is a 368-residue protein sequence, read N- to C-terminus: Anti-sigma-X factor RsiX (368 aa).

Over residues 73-87 the composition is skewed to polar residues; sequence QPQQKEASQENAVTK. The interval 73–101 is disordered; sequence QPQQKEASQENAVTKTETEDSPKAASSLD.

It localises to the cell membrane. Functionally, the anti-sigma factor for extracytoplasmic function (ECF) sigma factor SigX, inhibits SigX activity and stabilizes it. The sequence is that of Anti-sigma-X factor RsiX (rsiX) from Bacillus subtilis (strain 168).